The chain runs to 418 residues: Nuclear receptor coactivator 6 (418 aa).

Disordered stretches follow at residues 1–21 (EQIM…QNQS) and 77–98 (PPGP…ANND). The interval 1–215 (EQIMTNQMQG…PPRKKKNCHQ (215 aa)) is TBP/GTF2A-binding region. The CREBBP-binding region stretch occupies residues 1–352 (EQIMTNQMQG…LPVSQNVHPP (352 aa)). The NCOA1-binding region stretch occupies residues 1 to 418 (EQIMTNQMQG…YQESPQNSSS (418 aa)). The NCOA6IP-binding region stretch occupies residues 60–214 (VSNSPSQVMG…KPPRKKKNCH (155 aa)). Residues 84–98 (MAQQHTDPATTANND) are compositionally biased toward polar residues. Position 171 is a phosphoserine (serine 171). The LXXLL motif signature appears at 174–178 (LVNLL). The segment at 186–418 (HFGVNNKQNN…YQESPQNSSS (233 aa)) is disordered. The span at 190–199 (NNKQNNTNAN) shows a compositional bias: low complexity. The span at 200–212 (KQKKKKPPRKKKN) shows a compositional bias: basic residues. Low complexity predominate over residues 269-279 (PLQQMPPQLMQ). The segment covering 282 to 310 (APPPQPPQQQPQPQLPQQQPQPQPPPPSQ) has biased composition (pro residues). The span at 311–336 (PQSQQQQQQQQQQQQQQMMMMLMMQQ) shows a compositional bias: low complexity. An asymmetric dimethylarginine mark is found at arginine 342 and arginine 353. Residues 358–370 (PDSQRVPMQQSGN) are compositionally biased toward polar residues. An Asymmetric dimethylarginine modification is found at arginine 391. Residues 399–418 (PLGSNSRKMVYQESPQNSSS) are compositionally biased toward polar residues.

Monomer and homodimer. Interacts in vitro with the basal transcription factors GTF2A and TBP, suggesting an autonomous transactivation function. Interacts with NCOA1, CRSP3, RBM14, the histone acetyltransferase proteins EP300 and CREBBP, and with methyltransferase proteins NCOA6IP and PRMT2. Component of the MLL2/3 complex (also named ASCOM complex), at least composed of KMT2D/MLL2 or KMT2C/MLL3, ASH2L, RBBP5, WDR5, NCOA6, DPY30, KDM6A, PAXIP1/PTIP, PAGR1 and alpha- and beta-tubulin. Interacts with ZNF335; may enhance ligand-dependent transcriptional activation by nuclear hormone receptors. Phosphorylated.

It is found in the nucleus. Functionally, nuclear receptor coactivator that directly binds nuclear receptors and stimulates the transcriptional activities in a hormone-dependent fashion. Coactivate expression in an agonist- and AF2-dependent manner. May coactivate expression via a remodeling of chromatin and its interaction with histone acetyltransferase proteins. Involved in the coactivation of different nuclear receptors, such as for steroids (GR and ERs), retinoids (RARs and RXRs), thyroid hormone (TRs), vitamin D3 (VDR) and prostanoids (PPARs). Probably functions as a general coactivator, rather than just a nuclear receptor coactivator. May also be involved in the coactivation of the NF-kappa-B pathway. This Rattus norvegicus (Rat) protein is Nuclear receptor coactivator 6 (Ncoa6).